Here is an 82-residue protein sequence, read N- to C-terminus: Cyclin-dependent protein kinase inhibitor SMR5 (82 aa).

A disordered region spans residues 1–26 (MEEKNYDDGDTVTVDDDYQMGCTTPT). Residues 8 to 18 (DGDTVTVDDDY) show a composition bias toward acidic residues.

As to quaternary structure, interacts with CDKA-1 and D-type cyclins. In terms of tissue distribution, expressed in columella cells in the roots and in root meristems after induction.

Its function is as follows. Probable cyclin-dependent protein kinase (CDK) inhibitor that functions as a repressor of mitosis in the endoreduplication cell cycle. Acts as a potent cell cycle inhibitor, regulating a hydroxyurea-dependent checkpoint in leaves. Essential to activate a high-light-dependent cell cycle checkpoint. This Arabidopsis thaliana (Mouse-ear cress) protein is Cyclin-dependent protein kinase inhibitor SMR5.